The primary structure comprises 193 residues: Probable DNA-directed RNA polymerase subunit delta (193 aa).

An HTH HARE-type domain is found at 14–83 (LSMIEVARAI…GDNKWGLRSW (70 aa)). Composition is skewed to acidic residues over residues 119–133 (EDAI…EDEN) and 143–193 (YDND…ETND). A disordered region spans residues 119 to 193 (EDAIDYNDDD…DDDYEDETND (75 aa)).

This sequence belongs to the RpoE family. As to quaternary structure, RNAP is composed of a core of 2 alpha, a beta and a beta' subunits. The core is associated with a delta subunit and one of several sigma factors.

Its function is as follows. Participates in both the initiation and recycling phases of transcription. In the presence of the delta subunit, RNAP displays an increased specificity of transcription, a decreased affinity for nucleic acids, and an increased efficiency of RNA synthesis because of enhanced recycling. This is Probable DNA-directed RNA polymerase subunit delta from Streptococcus thermophilus (strain CNRZ 1066).